A 377-amino-acid polypeptide reads, in one-letter code: Tryptophan 2,3-dioxygenase (377 aa).

Substrate contacts are provided by residues 57–61 (FIITH) and Arg-128. His-313 contributes to the heme binding site. A substrate-binding site is contributed by Thr-328.

This sequence belongs to the tryptophan 2,3-dioxygenase family. In terms of assembly, homotetramer. Dimer of dimers. Heme serves as cofactor.

The enzyme catalyses L-tryptophan + O2 = N-formyl-L-kynurenine. It participates in amino-acid degradation; L-tryptophan degradation via kynurenine pathway; L-kynurenine from L-tryptophan: step 1/2. The protein operates within pigment biosynthesis; ommochrome biosynthesis. Heme-dependent dioxygenase that catalyzes the oxidative cleavage of the L-tryptophan (L-Trp) pyrrole ring and converts L-tryptophan to N-formyl-L-kynurenine. Catalyzes the oxidative cleavage of the indole moiety. This is Tryptophan 2,3-dioxygenase from Drosophila grimshawi (Hawaiian fruit fly).